Here is a 286-residue protein sequence, read N- to C-terminus: 4-hydroxy-tetrahydrodipicolinate synthase 2 (286 aa).

Thr45 provides a ligand contact to pyruvate. The active-site Proton donor/acceptor is Tyr133. Residue Lys161 is the Schiff-base intermediate with substrate of the active site. Ile203 contacts pyruvate.

Belongs to the DapA family. Homotetramer; dimer of dimers.

It is found in the cytoplasm. The enzyme catalyses L-aspartate 4-semialdehyde + pyruvate = (2S,4S)-4-hydroxy-2,3,4,5-tetrahydrodipicolinate + H2O + H(+). The protein operates within amino-acid biosynthesis; L-lysine biosynthesis via DAP pathway; (S)-tetrahydrodipicolinate from L-aspartate: step 3/4. Functionally, catalyzes the condensation of (S)-aspartate-beta-semialdehyde [(S)-ASA] and pyruvate to 4-hydroxy-tetrahydrodipicolinate (HTPA). The polypeptide is 4-hydroxy-tetrahydrodipicolinate synthase 2 (Clostridium acetobutylicum (strain ATCC 824 / DSM 792 / JCM 1419 / IAM 19013 / LMG 5710 / NBRC 13948 / NRRL B-527 / VKM B-1787 / 2291 / W)).